We begin with the raw amino-acid sequence, 540 residues long: MAAKEVKFHDHARTRIVQGVNVLADAVKVTLAPRAVMCLIERSFGAPVITKDGVSVAKEIELQDKFENMGAQMVKQVASKTADIAGDGTTTATVLAQAIVQEGMKHVVAGVNPMDLKRGIDKAVATVVDELHKLSKPITTNKEIAQVGSISANSDHPIGKIIADAMDKVGKEGVITVEDGKSLDNELDVVEGMQFDRGYLSPYFINNPEKQTVEFDDPLILLYDKKISSIRDLLPTLENVAKAGKPLLIIAEDLEGEALATLVVNSMRGILKVAAVKAPGFGDRRKAMLEDIAILTGATVISEETGKQLEKASLEDLGRAKRVELQKENTIIIDGAGEQKAIEARVKAIQAQIDESTSDYDREKLQERVAKLSGGVAVIKVGAATEVEMKEKKDRVDDALHATRAAVEEGIVPGGGVALLRARSRIVNLKGDNGDQDAGIRIVLRAIEAPLRAIAANAGDEPSVVINKVLAGSGNFGYNAATGEYADLVETGVVDPTKVTRTALQNAASVASLILTTDASIAELPKEEKAAVPAMPDMGY.

ATP contacts are provided by residues 30–33 (TLAP), K51, 87–91 (DGTTT), G415, 479–481 (NAA), and D495.

This sequence belongs to the chaperonin (HSP60) family. Forms a cylinder of 14 subunits composed of two heptameric rings stacked back-to-back. Interacts with the co-chaperonin GroES.

The protein localises to the cytoplasm. The catalysed reaction is ATP + H2O + a folded polypeptide = ADP + phosphate + an unfolded polypeptide.. Functionally, together with its co-chaperonin GroES, plays an essential role in assisting protein folding. The GroEL-GroES system forms a nano-cage that allows encapsulation of the non-native substrate proteins and provides a physical environment optimized to promote and accelerate protein folding. In Methylovorus sp. (strain SS1 / DSM 11726), this protein is Chaperonin GroEL.